The chain runs to 133 residues: Small ribosomal subunit protein eS8 (133 aa).

The segment at 1 to 34 is disordered; it reads MGVWHGRSLRKPTGGRIRPHRKKRKFEMGNPPTE.

Belongs to the eukaryotic ribosomal protein eS8 family. In terms of assembly, part of the 30S ribosomal subunit.

In Methanopyrus kandleri (strain AV19 / DSM 6324 / JCM 9639 / NBRC 100938), this protein is Small ribosomal subunit protein eS8.